The primary structure comprises 409 residues: Na(+)/H(+) antiporter NhaA 2 (409 aa).

12 consecutive transmembrane segments (helical) span residues 10–30, 60–80, 89–109, 118–138, 148–168, 171–191, 203–223, 224–244, 257–277, 283–303, 328–348, and 356–376; these read VAAGLLLLAAVVGLVVANTPA, GLLVVFFFIVAVELKHEFLAG, LVPAIAAVGGVVVPALVYLAI, GWPVPTATDIAFALGVLAVFG, FLLALAVLDDLIAIGIIAVFF, GLDLGALAIAVAGVVLFAVVG, IAVVALLVLVALVTWWATLSS, GIHATIAGVALGFALPRLSGL, IVLPLFAFSAALVAIPAIGLA, FWGIALALPLGKLVGITAGGL, LLGGIGFTVSLLMSELAFAGL, and TLAVLLGSGVAIVAAAVTLSI. Positions 384–409 are disordered; that stretch reads AGAAADDDDATRDDFPAHADGGPARA.

The protein belongs to the NhaA Na(+)/H(+) (TC 2.A.33) antiporter family.

Its subcellular location is the cell membrane. It catalyses the reaction Na(+)(in) + 2 H(+)(out) = Na(+)(out) + 2 H(+)(in). In terms of biological role, na(+)/H(+) antiporter that extrudes sodium in exchange for external protons. The sequence is that of Na(+)/H(+) antiporter NhaA 2 from Clavibacter michiganensis subsp. michiganensis (strain NCPPB 382).